Here is a 367-residue protein sequence, read N- to C-terminus: Phosphoribosylaminoimidazole-succinocarboxamide synthase (367 aa).

Belongs to the SAICAR synthetase family.

The enzyme catalyses 5-amino-1-(5-phospho-D-ribosyl)imidazole-4-carboxylate + L-aspartate + ATP = (2S)-2-[5-amino-1-(5-phospho-beta-D-ribosyl)imidazole-4-carboxamido]succinate + ADP + phosphate + 2 H(+). It participates in purine metabolism; IMP biosynthesis via de novo pathway; 5-amino-1-(5-phospho-D-ribosyl)imidazole-4-carboxamide from 5-amino-1-(5-phospho-D-ribosyl)imidazole-4-carboxylate: step 1/2. The chain is Phosphoribosylaminoimidazole-succinocarboxamide synthase from Shewanella amazonensis (strain ATCC BAA-1098 / SB2B).